We begin with the raw amino-acid sequence, 53 residues long: Photosystem II reaction center protein K (53 aa).

The propeptide occupies methionine 1 to alanine 16. The helical transmembrane segment at isoleucine 28–alanine 48 threads the bilayer.

This sequence belongs to the PsbK family. In terms of assembly, PSII is composed of 1 copy each of membrane proteins PsbA, PsbB, PsbC, PsbD, PsbE, PsbF, PsbH, PsbI, PsbJ, PsbK, PsbL, PsbM, PsbT, PsbX, PsbY, PsbZ, Psb30/Ycf12, at least 3 peripheral proteins of the oxygen-evolving complex and a large number of cofactors. It forms dimeric complexes.

It is found in the plastid. The protein localises to the chloroplast thylakoid membrane. One of the components of the core complex of photosystem II (PSII). PSII is a light-driven water:plastoquinone oxidoreductase that uses light energy to abstract electrons from H(2)O, generating O(2) and a proton gradient subsequently used for ATP formation. It consists of a core antenna complex that captures photons, and an electron transfer chain that converts photonic excitation into a charge separation. The sequence is that of Photosystem II reaction center protein K from Huperzia lucidula (Shining clubmoss).